The sequence spans 425 residues: Serine--tRNA ligase (425 aa).

230–232 contributes to the L-serine binding site; the sequence is TAE. ATP is bound at residue 261–263; the sequence is RSE. L-serine is bound at residue Glu284. 348–351 provides a ligand contact to ATP; it reads EISS. Position 384 (Ser384) interacts with L-serine.

Belongs to the class-II aminoacyl-tRNA synthetase family. Type-1 seryl-tRNA synthetase subfamily. As to quaternary structure, homodimer. The tRNA molecule binds across the dimer.

The protein resides in the cytoplasm. It catalyses the reaction tRNA(Ser) + L-serine + ATP = L-seryl-tRNA(Ser) + AMP + diphosphate + H(+). The catalysed reaction is tRNA(Sec) + L-serine + ATP = L-seryl-tRNA(Sec) + AMP + diphosphate + H(+). The protein operates within aminoacyl-tRNA biosynthesis; selenocysteinyl-tRNA(Sec) biosynthesis; L-seryl-tRNA(Sec) from L-serine and tRNA(Sec): step 1/1. Functionally, catalyzes the attachment of serine to tRNA(Ser). Is also able to aminoacylate tRNA(Sec) with serine, to form the misacylated tRNA L-seryl-tRNA(Sec), which will be further converted into selenocysteinyl-tRNA(Sec). The protein is Serine--tRNA ligase of Streptococcus sanguinis (strain SK36).